Here is a 479-residue protein sequence, read N- to C-terminus: MSSLVLRGVSRVEMPTISPTLGIYTRKFASQKILQRQFDVVIVGSGPVGLALAAGLQSNPVTQSLKVGLLDIQDTMKLKDWKFETYSNRCSSLTNHTRMFFDKIGAWDFARKDRIQPFQHILASDGLTNSSIHLDQKPGSEPMAFMSENVNLQYALLNSIIDKMNNNIKKPNLEFLMPCTITKLSKGENIYRTHIHTTTHGELTTKLLIGADGRNSIVRKYANISMPGWNYLTHAVVGTLKIDPLKGPAVAFQRFLPTGPLAYLPLPDNNATFVWSTRPHIASKLLRLPEETFVKFLNASFRLDYPDLSYLYQMDFSEPSKVNEQLDWRLQVKRNSNMQVPPVITEIVSGSRAAFPLRLAHVDEYVKEGIALCGDAAHNTHPLAGQGLNTGIQDVESLISALSFAIKHGQDIGSVFSLQPYFRDRYFKNHVYLGVVDKFHKLYAMENPVVTSVRTLGLSLFDRSASLKNFILSTVANGI.

It belongs to the UbiH/COQ6 family. Component of a multi-subunit COQ enzyme complex, composed of at least COQ3, COQ4, COQ5, COQ6, COQ7 and COQ9. The cofactor is FAD.

The protein resides in the mitochondrion inner membrane. It carries out the reaction 4-hydroxy-3-(all-trans-decaprenyl)benzoate + 2 reduced [2Fe-2S]-[ferredoxin] + O2 + 2 H(+) = 3,4-dihydroxy-5-(all-trans-decaprenyl)benzoate + 2 oxidized [2Fe-2S]-[ferredoxin] + H2O. It catalyses the reaction 2-methoxy-6-(all-trans-decaprenyl)phenol + 2 reduced [2Fe-2S]-[ferredoxin] + O2 + 2 H(+) = 2-methoxy-6-(all-trans-decaprenyl)benzene-1,4-diol + 2 oxidized [2Fe-2S]-[ferredoxin] + H2O. It functions in the pathway cofactor biosynthesis; ubiquinone biosynthesis. Its function is as follows. FAD-dependent monooxygenase required for two non-consecutive steps during ubiquinone biosynthesis. Required for the C5-ring hydroxylation during ubiquinone biosynthesis by catalyzing the hydroxylation of 4-hydroxy-3-(all-trans-decaprenyl)benzoic acid to 3,4-dihydroxy-5-(all-trans-decaprenyl)benzoic acid. Also acts downstream of COQ4, for the C1-hydroxylation during ubiquinone biosynthesis by catalyzing the hydroxylation of 2-methoxy-6-(all-trans-decaprenyl)phenol to 2-methoxy-6-(all-trans-decaprenyl)benzene-1,4-diol. The electrons required for the hydroxylation reaction are funneled indirectly to coq6 from NADPH via a ferredoxin/ferredoxin reductase system. This chain is Ubiquinone biosynthesis monooxygenase COQ6, mitochondrial, found in Schizosaccharomyces pombe (strain 972 / ATCC 24843) (Fission yeast).